We begin with the raw amino-acid sequence, 368 residues long: Alanine racemase (368 aa).

Catalysis depends on Lys40, which acts as the Proton acceptor; specific for D-alanine. At Lys40 the chain carries N6-(pyridoxal phosphate)lysine. Arg134 contributes to the substrate binding site. Tyr263 acts as the Proton acceptor; specific for L-alanine in catalysis. Met310 serves as a coordination point for substrate.

It belongs to the alanine racemase family. The cofactor is pyridoxal 5'-phosphate.

It catalyses the reaction L-alanine = D-alanine. The protein operates within amino-acid biosynthesis; D-alanine biosynthesis; D-alanine from L-alanine: step 1/1. Catalyzes the interconversion of L-alanine and D-alanine. May also act on other amino acids. The polypeptide is Alanine racemase (alr) (Listeria monocytogenes serotype 4b (strain CLIP80459)).